Here is a 296-residue protein sequence, read N- to C-terminus: Ribosomal RNA small subunit methyltransferase A (296 aa).

Residues Asn40, Val42, Gly67, Glu88, Asp118, and Asn137 each coordinate S-adenosyl-L-methionine.

Belongs to the class I-like SAM-binding methyltransferase superfamily. rRNA adenine N(6)-methyltransferase family. RsmA subfamily.

It is found in the cytoplasm. The enzyme catalyses adenosine(1518)/adenosine(1519) in 16S rRNA + 4 S-adenosyl-L-methionine = N(6)-dimethyladenosine(1518)/N(6)-dimethyladenosine(1519) in 16S rRNA + 4 S-adenosyl-L-homocysteine + 4 H(+). Specifically dimethylates two adjacent adenosines (A1518 and A1519) in the loop of a conserved hairpin near the 3'-end of 16S rRNA in the 30S particle. May play a critical role in biogenesis of 30S subunits. In Rhodococcus opacus (strain B4), this protein is Ribosomal RNA small subunit methyltransferase A.